Here is a 282-residue protein sequence, read N- to C-terminus: DegV domain-containing protein spr1415 (282 aa).

The DegV domain maps to 3–280 (LAVFTDSSAY…AGSIALGYIP (278 aa)). The hexadecanoate site is built by Thr61 and Ser94.

Its function is as follows. May bind long-chain fatty acids, such as palmitate, and may play a role in lipid transport or fatty acid metabolism. This Streptococcus pneumoniae (strain ATCC BAA-255 / R6) protein is DegV domain-containing protein spr1415.